A 482-amino-acid chain; its full sequence is MSALTALSIASEIFPLIKTGGLADVTGALPTALKPHGIAMRTLVPGYPAVLGGIENPQQVHSFADFFGGSARLLAARCDELELLVLDAPHLYVRPGNPYVGPDGKDWPDNALRFAALAQAGAAIGQGLLLGYAPDILHAHDWQTGLVPAYLAYSGRPAPKCVFTIHNLAYQGQFPYELLTRIGLPERAFSLDGVEYYGGIGYLKAGLQLADRITTVSPTYALEIQGPDAGMGLEGLLRLRADRLSGILNGIDTRVWDPTADELIPATYDIETIGARARNKQALQSRFGLRNAPDALLYGVISRLSWQKGLDMLLDVLPGMLAEGAQLALLGAGDTPLEQGFRAAALKYPGQVGAVIGYDEALAHQIQAGADALLVPSRFEPCGLTQLCALRYGAVPVVARVGGLADTVVDANEMAIATGVATGVQFSPVTAQMLAKALTKTAALHADHAAWRNLQINGMTTDVSWKNPAQHYARLYRELIDA.

Lys-18 lines the ADP-alpha-D-glucose pocket.

The protein belongs to the glycosyltransferase 1 family. Bacterial/plant glycogen synthase subfamily.

It catalyses the reaction [(1-&gt;4)-alpha-D-glucosyl](n) + ADP-alpha-D-glucose = [(1-&gt;4)-alpha-D-glucosyl](n+1) + ADP + H(+). It participates in glycan biosynthesis; glycogen biosynthesis. Its function is as follows. Synthesizes alpha-1,4-glucan chains using ADP-glucose. The sequence is that of Glycogen synthase from Rhodopseudomonas palustris (strain HaA2).